Reading from the N-terminus, the 185-residue chain is Pyruvate/ketoisovalerate oxidoreductases common subunit gamma (185 aa).

As to quaternary structure, heterotetramer of one alpha, one beta, one delta and one gamma chain.

The enzyme catalyses 2 oxidized [2Fe-2S]-[ferredoxin] + pyruvate + CoA = 2 reduced [2Fe-2S]-[ferredoxin] + acetyl-CoA + CO2 + H(+). It catalyses the reaction 3-methyl-2-oxobutanoate + 2 oxidized [2Fe-2S]-[ferredoxin] + CoA = 2-methylpropanoyl-CoA + 2 reduced [2Fe-2S]-[ferredoxin] + CO2 + H(+). This chain is Pyruvate/ketoisovalerate oxidoreductases common subunit gamma (porG), found in Pyrococcus abyssi (strain GE5 / Orsay).